We begin with the raw amino-acid sequence, 225 residues long: Small ribosomal subunit protein uS3 (225 aa).

A KH type-2 domain is found at 38–106 (IRKFIQSRFS…PVNLNIIEVK (69 aa)).

It belongs to the universal ribosomal protein uS3 family. In terms of assembly, part of the 30S ribosomal subunit. Forms a tight complex with proteins S10 and S14.

Its function is as follows. Binds the lower part of the 30S subunit head. Binds mRNA in the 70S ribosome, positioning it for translation. This Leptospira borgpetersenii serovar Hardjo-bovis (strain JB197) protein is Small ribosomal subunit protein uS3.